A 186-amino-acid polypeptide reads, in one-letter code: NADH dehydrogenase [ubiquinone] 1 beta subcomplex subunit 8, mitochondrial (186 aa).

Residues 1-28 constitute a mitochondrion transit peptide; the sequence is MAAARAGVLGVRWLQKAARNVVPLGART. A helical membrane pass occupies residues 133–153; it reads LFGFVAFMLFMFWVGETYPAY.

Belongs to the complex I NDUFB8 subunit family. Complex I is composed of 45 different subunits.

It localises to the mitochondrion inner membrane. Accessory subunit of the mitochondrial membrane respiratory chain NADH dehydrogenase (Complex I), that is believed not to be involved in catalysis. Complex I functions in the transfer of electrons from NADH to the respiratory chain. The immediate electron acceptor for the enzyme is believed to be ubiquinone. The sequence is that of NADH dehydrogenase [ubiquinone] 1 beta subcomplex subunit 8, mitochondrial (NDUFB8) from Bos taurus (Bovine).